We begin with the raw amino-acid sequence, 381 residues long: Succinyl-diaminopimelate desuccinylase (381 aa).

His-71 lines the Zn(2+) pocket. Residue Asp-73 is part of the active site. Residue Asp-104 coordinates Zn(2+). The Proton acceptor role is filled by Glu-138. Zn(2+) contacts are provided by Glu-139, Glu-167, and His-353.

Belongs to the peptidase M20A family. DapE subfamily. In terms of assembly, homodimer. Zn(2+) serves as cofactor. Requires Co(2+) as cofactor.

It catalyses the reaction N-succinyl-(2S,6S)-2,6-diaminopimelate + H2O = (2S,6S)-2,6-diaminopimelate + succinate. The protein operates within amino-acid biosynthesis; L-lysine biosynthesis via DAP pathway; LL-2,6-diaminopimelate from (S)-tetrahydrodipicolinate (succinylase route): step 3/3. Its function is as follows. Catalyzes the hydrolysis of N-succinyl-L,L-diaminopimelic acid (SDAP), forming succinate and LL-2,6-diaminopimelate (DAP), an intermediate involved in the bacterial biosynthesis of lysine and meso-diaminopimelic acid, an essential component of bacterial cell walls. The protein is Succinyl-diaminopimelate desuccinylase of Shewanella piezotolerans (strain WP3 / JCM 13877).